A 206-amino-acid polypeptide reads, in one-letter code: Ribosomal RNA large subunit methyltransferase E (206 aa).

Residues Gly61, Trp63, Asp81, Asp97, and Asp122 each coordinate S-adenosyl-L-methionine. Lys162 acts as the Proton acceptor in catalysis.

This sequence belongs to the class I-like SAM-binding methyltransferase superfamily. RNA methyltransferase RlmE family.

Its subcellular location is the cytoplasm. The enzyme catalyses uridine(2552) in 23S rRNA + S-adenosyl-L-methionine = 2'-O-methyluridine(2552) in 23S rRNA + S-adenosyl-L-homocysteine + H(+). In terms of biological role, specifically methylates the uridine in position 2552 of 23S rRNA at the 2'-O position of the ribose in the fully assembled 50S ribosomal subunit. The protein is Ribosomal RNA large subunit methyltransferase E of Neisseria meningitidis serogroup C / serotype 2a (strain ATCC 700532 / DSM 15464 / FAM18).